The sequence spans 697 residues: Beta-galactosidase 17 (697 aa).

Positions 1–35 (MAMTSWPSTGRQRRHQLASMLLLVLVVVGIYVPVF) are cleaved as a signal peptide. Glu218 serves as the catalytic Proton donor. Glu301 acts as the Nucleophile in catalysis. 5 N-linked (GlcNAc...) asparagine glycosylation sites follow: Asn333, Asn519, Asn573, Asn583, and Asn690.

The protein belongs to the glycosyl hydrolase 35 family. In terms of tissue distribution, ubiquitous, with higher expression levels in roots and siliques.

Its subcellular location is the secreted. The protein localises to the extracellular space. It localises to the apoplast. The enzyme catalyses Hydrolysis of terminal non-reducing beta-D-galactose residues in beta-D-galactosides.. This chain is Beta-galactosidase 17 (BGAL17), found in Arabidopsis thaliana (Mouse-ear cress).